Here is a 20-residue protein sequence, read N- to C-terminus: Alpha-amylase (20 aa).

The enzyme catalyses Endohydrolysis of (1-&gt;4)-alpha-D-glucosidic linkages in polysaccharides containing three or more (1-&gt;4)-alpha-linked D-glucose units.. With respect to regulation, strongly inhibited by Hg (2+). Inhibited by Zn (2+). Activated by Fe (2+), Mg (2+) and Ba (2+). Functionally, alpha-amylase active towards amylose, starch, amylopectin and maltodextrins. Has lower activity towards glycogen, and is not active towards alpha/beta-cyclodextrin. The chain is Alpha-amylase from Bacillus sp.